The sequence spans 526 residues: Protein spinster homolog 1 (526 aa).

The segment at 1–44 is disordered; the sequence is MTSRRSHGDVTPFLTQADNTEEEGVRDPESQSSDEEEEEGKDHG. A run of 12 helical transmembrane segments spans residues 59–79, 98–118, 126–146, 159–179, 187–207, 218–238, 272–292, 321–341, 355–375, 384–404, 419–439, and 463–483; these read VIIV…RFTV, GLVQ…FGYL, LIMC…SFVS, LVGV…ADLF, MLSF…IVGS, WALR…IFVA, FILS…LALW, MIFG…GVEI, LVCA…LAFA, VFIF…ADIL, LQIV…IGVI, and MICA…ALFI.

It belongs to the major facilitator superfamily. Spinster (TC 2.A.1.49) family.

Its subcellular location is the lysosome membrane. It carries out the reaction a 1-acyl-sn-glycero-3-phosphocholine(out) + H(+)(out) = a 1-acyl-sn-glycero-3-phosphocholine(in) + H(+)(in). The catalysed reaction is a 1-acyl-sn-glycero-3-phosphoethanolamine(out) + H(+)(out) = a 1-acyl-sn-glycero-3-phosphoethanolamine(in) + H(+)(in). It catalyses the reaction a 1-O-(1Z-alkenyl)-sn-glycero-3-phosphocholine(out) + H(+)(out) = a 1-O-(1Z-alkenyl)-sn-glycero-3-phosphocholine(in) + H(+)(in). The enzyme catalyses a 1-O-(1Z-alkenyl)-sn-glycero-3-phosphoethanolamine(out) + H(+)(out) = a 1-O-(1Z-alkenyl)-sn-glycero-3-phosphoethanolamine(in) + H(+)(in). Functionally, mediates the rate-limiting, proton-dependent, lysosomal efflux of lysophospholipids. Selective for zwitterionic headgroups such as lysophosphatidylcholine (LPC) and lysophosphatidylethanolamine (LPE). Essential player in lysosomal homeostasis. In Xenopus laevis (African clawed frog), this protein is Protein spinster homolog 1 (spns1).